Reading from the N-terminus, the 435-residue chain is Apparent malate synthase (435 aa).

Residues E159 and N180 each coordinate Mg(2+). E159 contributes to the substrate binding site.

It belongs to the HpcH/HpaI aldolase family. The cofactor is Mg(2+). Mn(2+) serves as cofactor. Co(2+) is required as a cofactor. It depends on Ca(2+) as a cofactor.

The enzyme catalyses (S)-malyl-CoA = glyoxylate + acetyl-CoA. It carries out the reaction (S)-malyl-CoA + H2O = (S)-malate + CoA + H(+). Functionally, involved in the methylaspartate cycle. Catalyzes the biosynthesis of malate in two steps. In the first reaction acetyl-CoA is condensed reversibly with glyoxylate to form (S)-malyl-CoA. In the second reaction (S)-malyl-CoA is hydrolyzed to malate and CoA. It can also catalyze the condensation of propionyl-CoA with glyoxylate and of acetyl-CoA with pyruvate, however the CoA-ester hydrolysis reaction is highly specific for (S)-malyl-CoA. This Haloarcula marismortui (strain ATCC 43049 / DSM 3752 / JCM 8966 / VKM B-1809) (Halobacterium marismortui) protein is Apparent malate synthase (aceB).